A 487-amino-acid chain; its full sequence is 1,4-beta-D-glucan cellobiohydrolase CEL6A (487 aa).

Residues 1 to 17 (MASKLFLAAALLQGALS) form the signal peptide. A CBM1 domain is found at 27–63 (ACAAQWGQCGGQDYTGPTCCQSGSTCVVSNQWYSQCL). Disulfide bonds link cysteine 35–cysteine 52 and cysteine 46–cysteine 62. The segment covering 64-117 (PGSSNPTTTSRTSTSSSSSTSRTSSSTSRPPSSVPTTPTSVPPTITTTPTTTPT) has biased composition (low complexity). The disordered stretch occupies residues 64-127 (PGSSNPTTTS…GGSGPGTTAS (64 aa)). The substrate site is built by tryptophan 175 and aspartate 177. Aspartate 216 is a catalytic residue. Aspartate 262 acts as the Proton donor in catalysis. Substrate-binding residues include histidine 307, tryptophan 310, asparagine 346, tryptophan 407, lysine 435, and glutamate 439. Catalysis depends on aspartate 441, which acts as the Proton acceptor.

This sequence belongs to the glycosyl hydrolase 6 (cellulase B) family.

It localises to the secreted. The catalysed reaction is Hydrolysis of (1-&gt;4)-beta-D-glucosidic linkages in cellulose and cellotetraose, releasing cellobiose from the non-reducing ends of the chains.. Functionally, exoglucanase that plays an important function in biomass degradation by catalyzing the hydrolysis of the non-reducing end beta-1,4-glucosidic linkages in cellulose and cellotetraose to release cellobiose. Shows higher hydrolytic activities on phosphoric acid-swollen cellulose (PSC), beta-glucan, and cellooligosaccharide derivatives than on cellulose, of which the best substrates were cellooligosaccharides. This is 1,4-beta-D-glucan cellobiohydrolase CEL6A from Pyricularia oryzae (strain 70-15 / ATCC MYA-4617 / FGSC 8958) (Rice blast fungus).